The primary structure comprises 320 residues: Cytochrome f (320 aa).

Positions 1–35 (MQNRNTFSWVKEQMTRFISVSIMIYVITRTSIANA) are cleaved as a signal peptide. Residues Y36, C56, C59, and H60 each contribute to the heme site. Residues 286-306 (VQGLLFFLASVILAQIFLVLK) form a helical membrane-spanning segment.

The protein belongs to the cytochrome f family. As to quaternary structure, the 4 large subunits of the cytochrome b6-f complex are cytochrome b6, subunit IV (17 kDa polypeptide, petD), cytochrome f and the Rieske protein, while the 4 small subunits are PetG, PetL, PetM and PetN. The complex functions as a dimer. It depends on heme as a cofactor.

It is found in the plastid. The protein localises to the chloroplast thylakoid membrane. In terms of biological role, component of the cytochrome b6-f complex, which mediates electron transfer between photosystem II (PSII) and photosystem I (PSI), cyclic electron flow around PSI, and state transitions. The chain is Cytochrome f from Acorus calamus (Sweet flag).